The primary structure comprises 127 residues: Riboflavin kinase (127 aa).

10–15 (GLGEGR) is a CDP binding site. Residues Thr-39 and Asn-41 each contribute to the Mg(2+) site. Thr-96 and Glu-104 together coordinate FMN. 109-112 (VHLR) is a binding site for CDP.

It belongs to the archaeal riboflavin kinase family. Mg(2+) is required as a cofactor.

The catalysed reaction is riboflavin + CTP = CDP + FMN + H(+). The protein operates within cofactor biosynthesis; FMN biosynthesis; FMN from riboflavin (CTP route): step 1/1. In terms of biological role, catalyzes the CTP-dependent phosphorylation of riboflavin (vitamin B2) to form flavin mononucleotide (FMN). In Methanococcus maripaludis (strain C7 / ATCC BAA-1331), this protein is Riboflavin kinase.